Here is a 77-residue protein sequence, read N- to C-terminus: VpAmp2.0 (77 aa).

The N-terminal stretch at 1 to 23 is a signal peptide; that stretch reads MQLRKALLVIFVAYLLVTDEAEA. The propeptide occupies 49-77; it reads RKREIEDLFDPYQKDLDLQRLDRFFSQFQ.

The protein belongs to the non-disulfide-bridged peptide (NDBP) superfamily. Medium-length antimicrobial peptide (group 3) family. Expressed by the venom gland.

It localises to the secreted. Its subcellular location is the target cell membrane. In terms of biological role, antimicrobial peptide with potent activity against Gram-positive bacteria S.aureus (MIC=10 uM) and S.agalactiaea (MIC=15 uM), and Gram-negative bacteria E.coli (MIC=24 uM) and P.aeruginosa (MIC=15 uM), as well as against yeasts Candida albicans (MIC=3.1 uM) and C.glabrata (MIC=25 uM). Also elicits low hemolysis on human erythrocytes (HC(50)=167 uM). The protein is VpAmp2.0 of Mesomexovis punctatus (Scorpion).